Reading from the N-terminus, the 747-residue chain is Potassium transporter 20 (747 aa).

The Cytoplasmic segment spans residues 1 to 47 (MSVQEDDDAAGPEVDRLRRHDSFYGDAEKVSNDKSHGTGENWARTLQ). A helical transmembrane segment spans residues 48 to 68 (LAFQSIGVVYGDVGTSPLYVY). Residues 69–84 (SSTFPDGVKHPDDLVG) lie on the Extracellular side of the membrane. Residues 85–105 (VLSLMLYTLILIPMVKYVFIV) traverse the membrane as a helical segment. At 106–171 (LYANDNGDGG…QKLESSNAAK (66 aa)) the chain is on the cytoplasmic side. Residues 172 to 192 (IALFTITILGTSMVMGDGTLT) form a helical membrane-spanning segment. Topologically, residues 193 to 209 (PAISVLSAVSGIREKAP) are extracellular. A helical transmembrane segment spans residues 210–230 (SLTQLQVVWISVPILIVLFSV). Over 231–237 (QRFGTDK) the chain is Cytoplasmic. A helical membrane pass occupies residues 238-258 (VGYSFAPVISVWFVLIAGIGA). The Extracellular portion of the chain corresponds to 259 to 288 (YNLAVHEITILRAFNPMYIIDYFRRNGKEA). The chain crosses the membrane as a helical span at residues 289 to 309 (WVSLGGAVLCITGTEAMFADL). Topologically, residues 310-318 (GHFNIRAIQ) are cytoplasmic. Residues 319 to 339 (LSFTCVLFPSVALCYMGQAAY) traverse the membrane as a helical segment. Residues 340–353 (LRKFPEDVGDTFYK) lie on the Extracellular side of the membrane. The helical transmembrane segment at 354–374 (SLPAPLFWPVFVVAIMAAIIA) threads the bilayer. Over 375–410 (SQAMLSGAFAILSKALPLGCFPRVEVVHTSNKYEGQ) the chain is Cytoplasmic. Residues 411 to 431 (VYIPEVNFLIGVASVAITVAF) traverse the membrane as a helical segment. Over 432–442 (QTTANIGNAYG) the chain is Extracellular. Residues 443–463 (ICVVMVFSITTHLMTVVMLLI) traverse the membrane as a helical segment. Over 464–469 (WKVRLP) the chain is Cytoplasmic. Residues 470–490 (FIAAFYVVFTFTEFLYLSSIL) traverse the membrane as a helical segment. Over 491 to 496 (SKFAEG) the chain is Extracellular. The helical transmembrane segment at 497–517 (GYLPFCFSLVLMALMATWHYV) threads the bilayer. Over 518-747 (HVKRYWYELD…LLKVGITYEI (230 aa)) the chain is Cytoplasmic.

It belongs to the HAK/KUP transporter (TC 2.A.72.3) family.

The protein localises to the membrane. In terms of biological role, high-affinity potassium transporter. This chain is Potassium transporter 20 (HAK20), found in Oryza sativa subsp. japonica (Rice).